The sequence spans 543 residues: Zinc finger protein tra-4 (543 aa).

The segment at 1–38 (MDDPNQCTIKQEDSITRPRPTEAPTIQNLKQEPAIEEG) is disordered. Residues 10 to 20 (KQEDSITRPRP) show a composition bias toward basic and acidic residues. 7 C2H2-type zinc fingers span residues 218–241 (VRCKKCKNRFIEKNIYERHLRDKH), 327–350 (PQCPFCDKRFRNEFSLKKHFAKKH), 381–406 (YVCFECTPIRNLCTDNRLLNHRKKFH), 413–436 (FRCSFCNMKFLTPRKLRKHKKMSH), 442–464 (FQCHFCEEIFISEVAVMTHERMH), 470–493 (FECKVCDFRANRYTAMEEHKRDEH), and 495–518 (YVCAICHERHAEYPEMKHHVYEEH).

The protein belongs to the krueppel C2H2-type zinc-finger protein family. In terms of assembly, interacts with histone deacetylase hda-1. May interact with nasp-1.

It localises to the nucleus. Functionally, probable transcription factor. Promotes normal hermaphrodite (XX) development, in concert with histone deacetylase hda-1 and nasp-1, perhaps as components of a complex. May cooperate with transcription factor tra-1 to repress male-specific genes in hermaphrodites. Synthetic multivulva (synMuv) class B protein, required to repress the induction of vulval development by let-60 Ras signaling. This Caenorhabditis elegans protein is Zinc finger protein tra-4.